Consider the following 90-residue polypeptide: Acylphosphatase (90 aa).

Positions 3 to 90 constitute an Acylphosphatase-like domain; the sequence is QRQFTVYGCV…RVFSDFTIER (88 aa). Residues arginine 18 and asparagine 36 contribute to the active site.

It belongs to the acylphosphatase family.

It catalyses the reaction an acyl phosphate + H2O = a carboxylate + phosphate + H(+). This chain is Acylphosphatase (acyP), found in Actinobacillus succinogenes (strain ATCC 55618 / DSM 22257 / CCUG 43843 / 130Z).